We begin with the raw amino-acid sequence, 310 residues long: Malate dehydrogenase (310 aa).

Residues 7–13 and D34 each bind NAD(+); that span reads GAAGGIG. Substrate is bound by residues R81 and R87. NAD(+) is bound by residues N94 and 117–119; that span reads ITN. Residues N119 and R153 each contribute to the substrate site. The active-site Proton acceptor is H177. Residue M227 coordinates NAD(+).

The protein belongs to the LDH/MDH superfamily. MDH type 1 family. Homodimer.

The catalysed reaction is (S)-malate + NAD(+) = oxaloacetate + NADH + H(+). Functionally, catalyzes the reversible oxidation of malate to oxaloacetate. The polypeptide is Malate dehydrogenase (Vibrio vulnificus (strain CMCP6)).